A 441-amino-acid chain; its full sequence is UPF0761 membrane protein RSc1559 (441 aa).

A run of 6 helical transmembrane segments spans residues 44-64 (VLSL…FPMF), 101-121 (GLTA…MLTV), 141-161 (VLVF…SLSV), 182-202 (VVVG…LYVF), 207-227 (LVAW…FEIA), and 248-268 (FAAL…TLLG).

This sequence belongs to the UPF0761 family.

It localises to the cell inner membrane. The chain is UPF0761 membrane protein RSc1559 from Ralstonia nicotianae (strain ATCC BAA-1114 / GMI1000) (Ralstonia solanacearum).